We begin with the raw amino-acid sequence, 413 residues long: Probable tRNA sulfurtransferase (413 aa).

Positions 61 to 171 (TRVLDRVTRV…EDGTYIFTEK (111 aa)) constitute a THUMP domain. ATP contacts are provided by residues 189–190 (ML), 214–215 (HF), R275, G297, and Q306.

Belongs to the ThiI family.

It localises to the cytoplasm. The enzyme catalyses [ThiI sulfur-carrier protein]-S-sulfanyl-L-cysteine + a uridine in tRNA + 2 reduced [2Fe-2S]-[ferredoxin] + ATP + H(+) = [ThiI sulfur-carrier protein]-L-cysteine + a 4-thiouridine in tRNA + 2 oxidized [2Fe-2S]-[ferredoxin] + AMP + diphosphate. It carries out the reaction [ThiS sulfur-carrier protein]-C-terminal Gly-Gly-AMP + S-sulfanyl-L-cysteinyl-[cysteine desulfurase] + AH2 = [ThiS sulfur-carrier protein]-C-terminal-Gly-aminoethanethioate + L-cysteinyl-[cysteine desulfurase] + A + AMP + 2 H(+). It participates in cofactor biosynthesis; thiamine diphosphate biosynthesis. Its function is as follows. Catalyzes the ATP-dependent transfer of a sulfur to tRNA to produce 4-thiouridine in position 8 of tRNAs, which functions as a near-UV photosensor. Also catalyzes the transfer of sulfur to the sulfur carrier protein ThiS, forming ThiS-thiocarboxylate. This is a step in the synthesis of thiazole, in the thiamine biosynthesis pathway. The sulfur is donated as persulfide by IscS. The chain is Probable tRNA sulfurtransferase from Natranaerobius thermophilus (strain ATCC BAA-1301 / DSM 18059 / JW/NM-WN-LF).